Reading from the N-terminus, the 208-residue chain is Uracil phosphoribosyltransferase (208 aa).

5-phospho-alpha-D-ribose 1-diphosphate-binding positions include R78, R103, and 130 to 138 (DPMLATGGS). Uracil is bound by residues I193 and 198-200 (GDA). D199 contacts 5-phospho-alpha-D-ribose 1-diphosphate.

The protein belongs to the UPRTase family. Mg(2+) serves as cofactor.

The enzyme catalyses UMP + diphosphate = 5-phospho-alpha-D-ribose 1-diphosphate + uracil. Its pathway is pyrimidine metabolism; UMP biosynthesis via salvage pathway; UMP from uracil: step 1/1. Its activity is regulated as follows. Allosterically activated by GTP. In terms of biological role, catalyzes the conversion of uracil and 5-phospho-alpha-D-ribose 1-diphosphate (PRPP) to UMP and diphosphate. The protein is Uracil phosphoribosyltransferase of Actinobacillus succinogenes (strain ATCC 55618 / DSM 22257 / CCUG 43843 / 130Z).